Here is a 209-residue protein sequence, read N- to C-terminus: Mitochondrial import inner membrane translocase subunit Tim23 (209 aa).

Helical transmembrane passes span 73–93 (FELAFFTIGGCCISGAAFGAL), 125–145 (ALWANTLGSLALLYSAFGVIV), and 180–200 (GGLAGLALASTFALYNNWEHI).

The protein belongs to the Tim17/Tim22/Tim23 family. As to quaternary structure, component of the TIM23 complex at least composed of timm23, timm17 and timm50. The complex interacts with the timm44 component of the PAM complex.

The protein localises to the mitochondrion inner membrane. Its function is as follows. Essential component of the TIM23 complex, a complex that mediates the translocation of transit peptide-containing proteins across the mitochondrial inner membrane. The protein is Mitochondrial import inner membrane translocase subunit Tim23 (timm23) of Xenopus laevis (African clawed frog).